A 439-amino-acid polypeptide reads, in one-letter code: (p)ppApp synthetase toxin Tas1 (439 aa).

The protein localises to the secreted. It catalyses the reaction AMP + ATP = adenosine 3'-diphosphate,5'-phosphate + AMP + H(+). It carries out the reaction ADP + ATP = adenosine 3'-diphosphate,5'-diphosphate + AMP. The enzyme catalyses 2 ATP = adenosine 3'-diphosphate,5'-triphosphate + AMP. Type VI secretion exported toxin that pyrophosphorylates adenosine nucleotides to produce (p)ppApp. Thereby, depletes cellular ADP and ATP to dysregulate central metabolism in competitor cells. The sequence is that of (p)ppApp synthetase toxin Tas1 (tas1) from Pseudomonas aeruginosa (strain UCBPP-PA14).